Reading from the N-terminus, the 526-residue chain is ATP synthase subunit alpha (526 aa).

174–181 serves as a coordination point for ATP; it reads GDRKTGKT. Residues 505–520 show a composition bias toward basic and acidic residues; it reads FEPARSEVKVETRPQE. The disordered stretch occupies residues 505–526; sequence FEPARSEVKVETRPQEEEGEEG.

The protein belongs to the ATPase alpha/beta chains family. F-type ATPases have 2 components, CF(1) - the catalytic core - and CF(0) - the membrane proton channel. CF(1) has five subunits: alpha(3), beta(3), gamma(1), delta(1), epsilon(1). CF(0) has three main subunits: a(1), b(2) and c(9-12). The alpha and beta chains form an alternating ring which encloses part of the gamma chain. CF(1) is attached to CF(0) by a central stalk formed by the gamma and epsilon chains, while a peripheral stalk is formed by the delta and b chains.

Its subcellular location is the cell membrane. The catalysed reaction is ATP + H2O + 4 H(+)(in) = ADP + phosphate + 5 H(+)(out). In terms of biological role, produces ATP from ADP in the presence of a proton gradient across the membrane. The alpha chain is a regulatory subunit. The polypeptide is ATP synthase subunit alpha (Rubrobacter xylanophilus (strain DSM 9941 / JCM 11954 / NBRC 16129 / PRD-1)).